A 156-amino-acid polypeptide reads, in one-letter code: Small ribosomal subunit protein uS7 (156 aa).

It belongs to the universal ribosomal protein uS7 family. In terms of assembly, part of the 30S ribosomal subunit. Contacts proteins S9 and S11.

Its function is as follows. One of the primary rRNA binding proteins, it binds directly to 16S rRNA where it nucleates assembly of the head domain of the 30S subunit. Is located at the subunit interface close to the decoding center, probably blocks exit of the E-site tRNA. This is Small ribosomal subunit protein uS7 from Nitrosospira multiformis (strain ATCC 25196 / NCIMB 11849 / C 71).